Reading from the N-terminus, the 320-residue chain is uncharacterized protein (320 aa).

Arginine 61 is subject to Omega-N-methylarginine. The tract at residues 299-320 is disordered; sequence LHLQHQKQTSKDAGRQTPERKA. A compositionally biased stretch (basic and acidic residues) spans 307–320; the sequence is TSKDAGRQTPERKA. Residue threonine 315 is modified to Phosphothreonine.

This is an uncharacterized protein from Mus musculus (Mouse).